The primary structure comprises 448 residues: Protein TraN (448 aa).

Disordered stretches follow at residues 243-273 (NRVG…NSGE) and 411-448 (EAAR…NKPS). The segment covering 246–261 (GASRTATTARAGQQQS) has biased composition (low complexity). The span at 262–271 (PAVKQSSGNS) shows a compositional bias: polar residues. Residues 421–437 (RKQEQEKKQAQERERGR) are compositionally biased toward basic and acidic residues. Positions 438–448 (SQSLGLSNKPS) are enriched in polar residues.

The protein to H.influenzae HI_1407.

The protein is Protein TraN (traN) of Escherichia coli.